We begin with the raw amino-acid sequence, 152 residues long: Lipoprotein signal peptidase (152 aa).

2 consecutive transmembrane segments (helical) span residues 55-75 (NKMWFFYIITVVFVVFIVFYM) and 85-105 (LGISLGLILGGAIGNFIDRVF). Residues Asp111 and Asp129 contribute to the active site. Residues 124-144 (VFNIADSALCIGVVLIIIQTL) traverse the membrane as a helical segment.

This sequence belongs to the peptidase A8 family.

Its subcellular location is the cell membrane. The catalysed reaction is Release of signal peptides from bacterial membrane prolipoproteins. Hydrolyzes -Xaa-Yaa-Zaa-|-(S,diacylglyceryl)Cys-, in which Xaa is hydrophobic (preferably Leu), and Yaa (Ala or Ser) and Zaa (Gly or Ala) have small, neutral side chains.. The protein operates within protein modification; lipoprotein biosynthesis (signal peptide cleavage). This protein specifically catalyzes the removal of signal peptides from prolipoproteins. This Bacillus cereus (strain G9842) protein is Lipoprotein signal peptidase.